A 529-amino-acid polypeptide reads, in one-letter code: Aldehyde dehydrogenase 1 (529 aa).

Position 251–256 (251–256 (GSTYVG)) interacts with NAD(+). Catalysis depends on residues glutamate 273 and cysteine 307.

This sequence belongs to the aldehyde dehydrogenase family.

The catalysed reaction is an aldehyde + NAD(+) + H2O = a carboxylate + NADH + 2 H(+). The polypeptide is Aldehyde dehydrogenase 1 (Entamoeba histolytica (strain ATCC 30459 / HM-1:IMSS / ABRM)).